Reading from the N-terminus, the 223-residue chain is Uracil-DNA glycosylase (223 aa).

The Proton acceptor role is filled by aspartate 67.

This sequence belongs to the uracil-DNA glycosylase (UDG) superfamily. UNG family.

Its subcellular location is the cytoplasm. The enzyme catalyses Hydrolyzes single-stranded DNA or mismatched double-stranded DNA and polynucleotides, releasing free uracil.. Excises uracil residues from the DNA which can arise as a result of misincorporation of dUMP residues by DNA polymerase or due to deamination of cytosine. In Borrelia turicatae (strain 91E135), this protein is Uracil-DNA glycosylase.